Reading from the N-terminus, the 568-residue chain is Protein yellow (568 aa).

The signal sequence occupies residues 1–28; the sequence is MHAQDKGGILPALSLLLIAVAMVSPSQA. N-linked (GlcNAc...) asparagine glycosylation is found at asparagine 151 and asparagine 222.

It belongs to the major royal jelly protein family.

The protein localises to the secreted. Functionally, controls the pigmentation pattern of the adult cuticle and larval mouth parts. The polypeptide is Protein yellow (y) (Drosophila madeirensis (Fruit fly)).